The primary structure comprises 161 residues: Vasotocin-neurophysin VT (161 aa).

The first 19 residues, 1–19 (MAEPSLPLSFLCLLALSSA), serve as a signal peptide directing secretion. Cysteines 20 and 25 form a disulfide. A Glycine amide modification is found at Gly28. 7 disulfides stabilise this stretch: Cys41/Cys85, Cys44/Cys58, Cys52/Cys75, Cys59/Cys65, Cys92/Cys104, Cys98/Cys116, and Cys105/Cys110.

The protein belongs to the vasopressin/oxytocin family. Seven disulfide bonds are present in neurophysin.

Its subcellular location is the secreted. Its function is as follows. Vasotocin is an antidiuretic hormone. The sequence is that of Vasotocin-neurophysin VT from Gallus gallus (Chicken).